The sequence spans 785 residues: Proprotein convertase subtilisin/kexin type 7 (785 aa).

Residues 1-37 form the signal peptide; sequence MPKGRQKVPHLDAPLGLPTCLWLELAGLFLLVPWVMG. Residues 38–141 constitute a propeptide that is removed on maturation; that stretch reads LAGTGGPDGQ…EQRLLRRAKR (104 aa). At 142–667 the chain is on the extracellular side; it reads SVHFNDPKYP…YTITPNTLKT (526 aa). The region spanning 153–473 is the Peptidase S8 domain; that stretch reads QWHLNNRRSP…FGLLNAWRLV (321 aa). 2 N-linked (GlcNAc...) asparagine glycosylation sites follow: Asn167 and Asn175. Asp187 functions as the Charge relay system in the catalytic mechanism. The segment at 197 to 219 is disordered; sequence IAPNYSPEGSYDLNSNDPDPMPH. The active-site Charge relay system is the His228. Asn241 carries N-linked (GlcNAc...) asparagine glycosylation. Ser406 acts as the Charge relay system in catalysis. A P/Homo B domain is found at 481–618; the sequence is SVPYLASYVS…QLTLYGSVWS (138 aa). An N-linked (GlcNAc...) asparagine glycan is attached at Asn511. A helical membrane pass occupies residues 668–688; that stretch reads LVLVGCFTVFWTVYYMLEVYL. Topologically, residues 689–785 are cytoplasmic; it reads SQRNVASNQV…VPHGKEEQIC (97 aa). The tract at residues 700-751 is disordered; that stretch reads RSGPCHWPHRSRKAKEEGTELESVPLCSSKDPDEVETESRGPPTTSDLLAPD.

This sequence belongs to the peptidase S8 family. Ca(2+) serves as cofactor. Cysteine residues in the cytoplasmic tail are probably palmitoylated. Post-translationally, N-glycosylated. As to expression, expressed in spleen, thymus, prostate, testis, ovary, small intestine, colon and peripheral blood leukocyte.

It localises to the golgi apparatus. It is found in the trans-Golgi network membrane. Inhibited by zinc and copper. Serine endoprotease that processes various proproteins by cleavage at paired basic amino acids, recognizing the RXXX[KR]R consensus motif. Likely functions in the constitutive secretory pathway. This Homo sapiens (Human) protein is Proprotein convertase subtilisin/kexin type 7 (PCSK7).